Reading from the N-terminus, the 241-residue chain is Probable transcriptional regulatory protein SAR11_0592 (241 aa).

Residues 1–24 are disordered; the sequence is MSGHSKWASIKHSKGKADKQRSKV.

This sequence belongs to the TACO1 family.

The protein resides in the cytoplasm. In Pelagibacter ubique (strain HTCC1062), this protein is Probable transcriptional regulatory protein SAR11_0592.